A 229-amino-acid chain; its full sequence is Potassium/proton antiporter CemA (229 aa).

Transmembrane regions (helical) follow at residues 7–27, 107–127, and 189–209; these read FTPLFYLASIVFLPWWISFSV, ILHFSTNIICFIILSGYSILG, and IISGLVSTFPVILDTIFKYWI.

The protein belongs to the CemA family.

The protein resides in the plastid. Its subcellular location is the chloroplast inner membrane. The catalysed reaction is K(+)(in) + H(+)(out) = K(+)(out) + H(+)(in). Its function is as follows. Contributes to K(+)/H(+) antiport activity by supporting proton efflux to control proton extrusion and homeostasis in chloroplasts in a light-dependent manner to modulate photosynthesis. Prevents excessive induction of non-photochemical quenching (NPQ) under continuous-light conditions. Indirectly promotes efficient inorganic carbon uptake into chloroplasts. The chain is Potassium/proton antiporter CemA from Nicotiana sylvestris (Wood tobacco).